The chain runs to 281 residues: NADPH-dependent 7-cyano-7-deazaguanine reductase (281 aa).

Residue 88 to 90 (VES) participates in substrate binding. 90–91 (SK) provides a ligand contact to NADPH. The active-site Thioimide intermediate is the cysteine 189. Catalysis depends on aspartate 196, which acts as the Proton donor. 228–229 (HE) is a substrate binding site. 257-258 (RG) contributes to the NADPH binding site.

It belongs to the GTP cyclohydrolase I family. QueF type 2 subfamily. As to quaternary structure, homodimer.

The protein localises to the cytoplasm. It carries out the reaction 7-aminomethyl-7-carbaguanine + 2 NADP(+) = 7-cyano-7-deazaguanine + 2 NADPH + 3 H(+). Its pathway is tRNA modification; tRNA-queuosine biosynthesis. Functionally, catalyzes the NADPH-dependent reduction of 7-cyano-7-deazaguanine (preQ0) to 7-aminomethyl-7-deazaguanine (preQ1). This chain is NADPH-dependent 7-cyano-7-deazaguanine reductase, found in Klebsiella pneumoniae (strain 342).